A 196-amino-acid chain; its full sequence is Probable peptidyl-prolyl cis-trans isomerase (196 aa).

The N-terminal stretch at 1–26 (MSFIRSALAAAAFVALSIGAVQTASA) is a signal peptide. One can recognise a PPIase cyclophilin-type domain in the interval 29 to 194 (PENTVILKLK…KIIKATIEAD (166 aa)).

It belongs to the cyclophilin-type PPIase family.

Its subcellular location is the periplasm. It catalyses the reaction [protein]-peptidylproline (omega=180) = [protein]-peptidylproline (omega=0). In terms of biological role, PPIases accelerate the folding of proteins. It catalyzes the cis-trans isomerization of proline imidic peptide bonds in oligopeptides. In Brucella melitensis biotype 1 (strain ATCC 23456 / CCUG 17765 / NCTC 10094 / 16M), this protein is Probable peptidyl-prolyl cis-trans isomerase (ppi).